The following is a 353-amino-acid chain: Photosystem II protein D1 (353 aa).

An N-acetylthreonine modification is found at T2. The residue at position 2 (T2) is a Phosphothreonine. 3 consecutive transmembrane segments (helical) span residues 29-46, 118-133, and 142-156; these read NIGW…TATS, HFLL…EWEL, and WIAV…AATA. H118 contributes to the chlorophyll a binding site. Y126 serves as a coordination point for pheophytin a. D170 and E189 together coordinate [CaMn4O5] cluster. A helical transmembrane segment spans residues 197–218; that stretch reads FHMLGVAGVFGGSLFSAMHGSL. H198 serves as a coordination point for chlorophyll a. A quinone contacts are provided by residues H215 and 264–265; that span reads SF. H215 serves as a coordination point for Fe cation. A Fe cation-binding site is contributed by H272. The helical transmembrane segment at 274 to 288 threads the bilayer; the sequence is FLAAWPVVGIWFTAL. The [CaMn4O5] cluster site is built by H332, E333, D342, and A344. A propeptide spanning residues 345–353 is cleaved from the precursor; the sequence is AVEAPAVNG.

This sequence belongs to the reaction center PufL/M/PsbA/D family. PSII is composed of 1 copy each of membrane proteins PsbA, PsbB, PsbC, PsbD, PsbE, PsbF, PsbH, PsbI, PsbJ, PsbK, PsbL, PsbM, PsbT, PsbX, PsbY, PsbZ, Psb30/Ycf12, at least 3 peripheral proteins of the oxygen-evolving complex and a large number of cofactors. It forms dimeric complexes. The cofactor is The D1/D2 heterodimer binds P680, chlorophylls that are the primary electron donor of PSII, and subsequent electron acceptors. It shares a non-heme iron and each subunit binds pheophytin, quinone, additional chlorophylls, carotenoids and lipids. D1 provides most of the ligands for the Mn4-Ca-O5 cluster of the oxygen-evolving complex (OEC). There is also a Cl(-1) ion associated with D1 and D2, which is required for oxygen evolution. The PSII complex binds additional chlorophylls, carotenoids and specific lipids.. Tyr-161 forms a radical intermediate that is referred to as redox-active TyrZ, YZ or Y-Z. In terms of processing, C-terminally processed by CTPA; processing is essential to allow assembly of the oxygen-evolving complex and thus photosynthetic growth.

The protein resides in the plastid. It localises to the chloroplast thylakoid membrane. It catalyses the reaction 2 a plastoquinone + 4 hnu + 2 H2O = 2 a plastoquinol + O2. Its function is as follows. Photosystem II (PSII) is a light-driven water:plastoquinone oxidoreductase that uses light energy to abstract electrons from H(2)O, generating O(2) and a proton gradient subsequently used for ATP formation. It consists of a core antenna complex that captures photons, and an electron transfer chain that converts photonic excitation into a charge separation. The D1/D2 (PsbA/PsbD) reaction center heterodimer binds P680, the primary electron donor of PSII as well as several subsequent electron acceptors. This Dumortiera hirsuta (Liverwort) protein is Photosystem II protein D1.